A 331-amino-acid chain; its full sequence is Ketol-acid reductoisomerase (NADP(+)) (331 aa).

The KARI N-terminal Rossmann domain occupies 2–182; that stretch reads AQLFYDSDAD…GGTRAGILET (181 aa). Residues 25 to 28, Ser51, Ser53, and 83 to 86 contribute to the NADP(+) site; these read YGSQ and DEFQ. His108 is an active-site residue. Gly134 is an NADP(+) binding site. A KARI C-terminal knotted domain is found at 183-328; it reads NFKEETETDL…KGLRSMFSWL (146 aa). 4 residues coordinate Mg(2+): Asp191, Glu195, Glu227, and Glu231. Ser252 contacts substrate.

Belongs to the ketol-acid reductoisomerase family. Mg(2+) serves as cofactor.

It catalyses the reaction (2R)-2,3-dihydroxy-3-methylbutanoate + NADP(+) = (2S)-2-acetolactate + NADPH + H(+). It carries out the reaction (2R,3R)-2,3-dihydroxy-3-methylpentanoate + NADP(+) = (S)-2-ethyl-2-hydroxy-3-oxobutanoate + NADPH + H(+). The protein operates within amino-acid biosynthesis; L-isoleucine biosynthesis; L-isoleucine from 2-oxobutanoate: step 2/4. Its pathway is amino-acid biosynthesis; L-valine biosynthesis; L-valine from pyruvate: step 2/4. In terms of biological role, involved in the biosynthesis of branched-chain amino acids (BCAA). Catalyzes an alkyl-migration followed by a ketol-acid reduction of (S)-2-acetolactate (S2AL) to yield (R)-2,3-dihydroxy-isovalerate. In the isomerase reaction, S2AL is rearranged via a Mg-dependent methyl migration to produce 3-hydroxy-3-methyl-2-ketobutyrate (HMKB). In the reductase reaction, this 2-ketoacid undergoes a metal-dependent reduction by NADPH to yield (R)-2,3-dihydroxy-isovalerate. The polypeptide is Ketol-acid reductoisomerase (NADP(+)) (Synechococcus sp. (strain CC9311)).